A 555-amino-acid chain; its full sequence is Glypican-6 (555 aa).

The signal sequence occupies residues 1 to 23 (MPSWIGAVILPLLGLLLSLPAGA). A compositionally biased stretch (low complexity) spans 348–357 (PALRSARSAP). The disordered stretch occupies residues 348 to 376 (PALRSARSAPENFNTRFRPYNPEERPTTA). Serine 529 carries the GPI-anchor amidated serine lipid modification. The propeptide at 530-555 (SAAQRGHSLLSWSLTCIVLALQRLCR) is removed in mature form.

The protein belongs to the glypican family.

It is found in the cell membrane. The protein localises to the secreted. Its subcellular location is the extracellular space. Its function is as follows. Cell surface proteoglycan that bears heparan sulfate. Putative cell surface coreceptor for growth factors, extracellular matrix proteins, proteases and anti-proteases. Enhances migration and invasion of cancer cells through WNT5A signaling. In Pongo abelii (Sumatran orangutan), this protein is Glypican-6 (GPC6).